The primary structure comprises 587 residues: GATA zinc finger domain-containing protein 3 (587 aa).

Low complexity predominate over residues 53–74; that stretch reads NINNNINNNNNNNNNNNNNNIN. 3 disordered regions span residues 53-141, 179-294, and 312-392; these read NINN…LKIP, QLAH…SSPS, and QTSP…ATIN. Positions 75 to 86 are enriched in polar residues; that stretch reads QYHQNHYDQYSD. Composition is skewed to low complexity over residues 87-136, 183-202, 237-264, 272-292, and 316-333; these read NNCN…NNNN, NSSM…TPTS, NING…INNG, GNNN…NSSS, and SQQS…QQSQ. Composition is skewed to polar residues over residues 340–358 and 365–379; these read INTT…TNSP and NESS…TPLS. Residues 500–525 form a GATA-type zinc finger; the sequence is CIFCGTMETPEWRKGPGGHKTLCNAC. The segment at 536–587 is disordered; that stretch reads ENQNNGGSPNPQQNNVTTTTTTTTSTSTNSPNSNGNNFSPESAMSVSKLISD. The span at 538–575 shows a compositional bias: low complexity; the sequence is QNNGGSPNPQQNNVTTTTTTTTSTSTNSPNSNGNNFSP. The segment covering 577-587 has biased composition (polar residues); the sequence is SAMSVSKLISD.

The protein is GATA zinc finger domain-containing protein 3 (gtaC) of Dictyostelium discoideum (Social amoeba).